A 480-amino-acid chain; its full sequence is Pre-glycoprotein polyprotein GP complex (480 aa).

Residue glycine 2 is the site of N-myristoyl glycine; by host attachment. At 2–17 (GQLVSFFQEIPVFFQE) the chain is on the extracellular side. A helical membrane pass occupies residues 18-33 (ALNIALAVVTLLAIVK). Topologically, residues 34-58 (GVLNLWKSGLFQLLMFLILAGRSCS) are cytoplasmic. A Zn(2+)-binding site is contributed by cysteine 57. Residues 59-419 (FRIGYHTSFE…QGRTPLTLVD (361 aa)) lie on the Extracellular side of the membrane. 4 disulfides stabilise this stretch: cysteine 85-cysteine 221, cysteine 266-cysteine 279, cysteine 288-cysteine 297, and cysteine 351-cysteine 372. Asparagine 88, asparagine 174, and asparagine 214 each carry an N-linked (GlcNAc...) asparagine; by host glycan. Asparagine 352, asparagine 360, asparagine 377, and asparagine 382 each carry an N-linked (GlcNAc...) asparagine; by host glycan. A helical transmembrane segment spans residues 420–440 (LCFWSAVFYTTTLFLHLVGFP). Residues 441–480 (THRHISGEPCPLPHRLNRHGACNCGRFKRLKKPLVWYKHH) lie on the Cytoplasmic side of the membrane. The Zn(2+) site is built by histidine 442, histidine 444, cysteine 450, histidine 454, cysteine 462, cysteine 464, and histidine 480.

This sequence belongs to the arenaviridae GPC protein family. In terms of assembly, interacts with glycoprotein G2. Part of the GP complex (GP-C) together with glycoprotein G1 and glycoprotein G2. The GP-complex interacts with protein Z, which interacts with ribonucleocapsid; these interactions may induce virion budding. Homotrimer; disulfide-linked. In pre-fusion state, G1 homotrimers bind G2 homotrimers via ionic interactions. Part of the GP complex (GP-C) together with glycoprotein G2 and the stable signal peptide. The GP-complex interacts with protein Z, which interacts with ribonucleocapsid; these interactions may induce virion budding. As to quaternary structure, homotrimer. Interacts with the stable signal peptide. In pre-fusion state, G2 homotrimers bind G1 homotrimers via ionic interactions. Part of the GP complex (GP-C) together with glycoprotein G1 and the stable signal peptide. Acidification in the endosome triggers rearrangements, which ultimately leads to a 6 helix bundle formed by the two heptad repeat domains (HR1 and HR2) in post-fusion state. The GP-complex interacts with protein Z, which interacts with ribonucleocapsid; these interactions may induce virion budding. Post-translationally, specific enzymatic cleavages in vivo yield mature proteins. GP-C polyprotein is cleaved in the endoplasmic reticulum by the host protease MBTPS1. Only cleaved glycoprotein is incorporated into virions. In terms of processing, the SSP remains stably associated with the GP complex following cleavage by signal peptidase and plays crucial roles in the trafficking of GP through the secretory pathway. Myristoylation is necessary for GP2-mediated fusion activity.

The protein localises to the virion membrane. It is found in the host endoplasmic reticulum membrane. The protein resides in the host Golgi apparatus membrane. Its subcellular location is the host cell membrane. Functionally, functions as a cleaved signal peptide that is retained as the third component of the GP complex (GP-C). Helps to stabilize the spike complex in its native conformation. The SSP is required for efficient glycoprotein expression, post-translational maturation cleavage of G1 and G2, glycoprotein transport to the cell surface plasma membrane, formation of infectious virus particles, and acid pH-dependent glycoprotein-mediated cell fusion. Its function is as follows. Forms the virion spikes together with glycoprotein G2. The glycoprotein spike trimers are connected to the underlying matrix. Interacts with the host receptor leading to virus endocytosis. Forms the virion spikes together with glycoprotein G1. The glycoprotein spike trimers are connected to the underlying matrix. Class I viral fusion protein that directs fusion of viral and host endosomal membranes, leading to delivery of the nucleocapsid into the cytoplasm. Membrane fusion is mediated by irreversible conformational changes induced by acidification. The protein is Pre-glycoprotein polyprotein GP complex of Cupixi mammarenavirus (isolate Rat/Brasil/BeAn 119303/1970) (CPXV).